We begin with the raw amino-acid sequence, 319 residues long: Polyprenal reductase (319 aa).

The Cytoplasmic portion of the chain corresponds to Met1–Ser12. Residues Leu13 to Leu33 traverse the membrane as a helical segment. The Lumenal portion of the chain corresponds to Gln34–His79. Residues Phe80 to Leu100 form a helical membrane-spanning segment. The Cytoplasmic segment spans residues Gln101–Pro122. A helical transmembrane segment spans residues Gln123–Leu143. Over Arg144–Gly158 the chain is Lumenal. The helical transmembrane segment at Val159 to Ile179 threads the bilayer. The Cytoplasmic segment spans residues Leu180–Asp195. Residues Leu196 to Leu216 traverse the membrane as a helical segment. Residues His217–Ser266 lie on the Lumenal side of the membrane. A helical membrane pass occupies residues Ile267–Leu287. Residues Ser288–Phe319 lie on the Cytoplasmic side of the membrane.

It belongs to the steroid 5-alpha reductase family. Polyprenal reductase subfamily.

It localises to the endoplasmic reticulum membrane. The catalysed reaction is a di-trans,poly-cis-dolichal + NADP(+) = a di-trans,poly-cis-polyprenal + NADPH + H(+). The enzyme catalyses a 3-oxo-5alpha-steroid + NADP(+) = a 3-oxo-Delta(4)-steroid + NADPH + H(+). It carries out the reaction androst-4-ene-3,17-dione + NADPH + H(+) = 5alpha-androstan-3,17-dione + NADP(+). It catalyses the reaction 17beta-hydroxy-5alpha-androstan-3-one + NADP(+) = testosterone + NADPH + H(+). The protein operates within protein modification; protein glycosylation. Its function is as follows. Plays a key role in early steps of protein N-linked glycosylation by being involved in the conversion of polyprenol into dolichol. Acts as a polyprenal reductase that mediates the reduction of polyprenal into dolichal in a NADP-dependent mechanism. Dolichols are required for the synthesis of dolichol-linked monosaccharides and the oligosaccharide precursor used for N-glycosylation. Also able to convert testosterone (T) into 5-alpha-dihydrotestosterone (DHT). The protein is Polyprenal reductase (srd5a3) of Xenopus laevis (African clawed frog).